A 287-amino-acid chain; its full sequence is 4-diphosphocytidyl-2-C-methyl-D-erythritol kinase (287 aa).

Residue Lys11 is part of the active site. 93-103 (PFGAGLGGGSS) contributes to the ATP binding site. Asp135 is a catalytic residue.

This sequence belongs to the GHMP kinase family. IspE subfamily.

The enzyme catalyses 4-CDP-2-C-methyl-D-erythritol + ATP = 4-CDP-2-C-methyl-D-erythritol 2-phosphate + ADP + H(+). The protein operates within isoprenoid biosynthesis; isopentenyl diphosphate biosynthesis via DXP pathway; isopentenyl diphosphate from 1-deoxy-D-xylulose 5-phosphate: step 3/6. Functionally, catalyzes the phosphorylation of the position 2 hydroxy group of 4-diphosphocytidyl-2C-methyl-D-erythritol. This Pelodictyon phaeoclathratiforme (strain DSM 5477 / BU-1) protein is 4-diphosphocytidyl-2-C-methyl-D-erythritol kinase.